Here is a 412-residue protein sequence, read N- to C-terminus: MQVYLVGGAVRDYLLGHSYQEKDYVVVGATPEHMLAQGFQPVGKDFPVFLHPETKEEYALARTERKSGQGYHGFQFFTDTTVSLEDDLIRRDLTINAIAMDQDGKIYDPYGGQNDLENKILRHVSEAFAEDPLRVLRVARFAARYFPYGFQIAPETLQLMQTMADSGELDALTPERVWKETSRALMENHADIYFQTLRDCGALKHLFPEIDALFGVPQRPEYHPEVDCGIHTLMSLQQACKSNYSLDVRFAVLVHDLGKALTPAKELPRHIMHEERGIKPVTQLCERLRVPTQTKQLALSVCKEHLKCHQIMSLKPGTLWRLLQRLDVLRRPERVEAFVQACECDAKGRLGLEDRPYPQAQYMREAMQIVRSIKVQDLPENIKGAEIGEMLIQYRIEALAEFKNQHQSLSHS.

ATP is bound by residues Gly-8 and Arg-11. The CTP site is built by Gly-8 and Arg-11. Glu-21 and Asp-23 together coordinate Mg(2+). The ATP site is built by Arg-91, Arg-137, and Arg-140. The CTP site is built by Arg-91, Arg-137, and Arg-140. One can recognise an HD domain in the interval Cys-228 to Leu-329.

The protein belongs to the tRNA nucleotidyltransferase/poly(A) polymerase family. Bacterial CCA-adding enzyme type 1 subfamily. As to quaternary structure, monomer. Can also form homodimers and oligomers. Mg(2+) serves as cofactor. Requires Ni(2+) as cofactor.

The enzyme catalyses a tRNA precursor + 2 CTP + ATP = a tRNA with a 3' CCA end + 3 diphosphate. It catalyses the reaction a tRNA with a 3' CCA end + 2 CTP + ATP = a tRNA with a 3' CCACCA end + 3 diphosphate. Functionally, catalyzes the addition and repair of the essential 3'-terminal CCA sequence in tRNAs without using a nucleic acid template. Adds these three nucleotides in the order of C, C, and A to the tRNA nucleotide-73, using CTP and ATP as substrates and producing inorganic pyrophosphate. tRNA 3'-terminal CCA addition is required both for tRNA processing and repair. Also involved in tRNA surveillance by mediating tandem CCA addition to generate a CCACCA at the 3' terminus of unstable tRNAs. While stable tRNAs receive only 3'-terminal CCA, unstable tRNAs are marked with CCACCA and rapidly degraded. The chain is Multifunctional CCA protein from Acinetobacter baumannii (strain SDF).